We begin with the raw amino-acid sequence, 149 residues long: UPF0178 protein Mmwyl1_2258 (149 aa).

The protein belongs to the UPF0178 family.

This chain is UPF0178 protein Mmwyl1_2258, found in Marinomonas sp. (strain MWYL1).